The chain runs to 165 residues: Large ribosomal subunit protein uL11 (165 aa).

It belongs to the universal ribosomal protein uL11 family.

Functionally, binds directly to 26S ribosomal RNA. The polypeptide is Large ribosomal subunit protein uL11 (rpl-12) (Caenorhabditis briggsae).